Here is a 929-residue protein sequence, read N- to C-terminus: MKLKETLNLGKTAFPMRAGLPNKEPIWQKEWEEAKVYQRRQELNQGKPHFTLHDGPPYANGNIHVGHAMNKISKDIIVRSKSMSGFYAPFIPGWDTHGLPIEQVLAKQGVKRKELDRAEYLKMCRDYALSQVDKQREDFKRLGVSADWENPYVTLTPDYEAAQIRVFGEMAKKGYIYQGAKPVYWSWSSESALAEAEIEYHDLVSTSLYYANKVKDGKGVLDTDTYIVVWTTTPFTVTASRGLAVGADIEYVLVKPAGETRKFIVASELLNSLSEKFAWEEVEVLNTYRGDELNQIVTEHPWDSEVDELVILGEHVTTDSGTGIVHTAPGFGEDDYNVGVANGLEVVVTVNERGIMMENAGPDFAGKFYDKVAPIVMEKLGDLLLAKEEISHSYPFDWRTKKPIIWRAVPQWFASVSKFRQEILDEIEKVKFHSEWGKVRLYNMIRDRGDWVISRQRAWGVPLPIFYAEDRTPIMTEETIEHVAKLFEEHGSVIWWERDAKDLLPEGFTHPGSPNGEFTKENDIMDVWFDSGSSWNGVVVNRPELTYPADLYLEGSDQYRGWFNSSLITSVANHGVAPYKQLLSQGFALDGKGEKMSKSLGNTIAPSDVEKQFGAEILRLWVTSVDTSNDVRISMDILSQVSESYRKIRNTLRFLIANTSDFNPTTDAVAFEDLRSVDQYMTIRFNQLVKNIRDAYENFEFLTIYKSLVNFINVELSAFYLDFAKDVVYIESAKSLERRQMQTVFYDILVKITKLLTPILPHTAEEIWSYLEFENEDYVQLSELPEAEDFANQDALLEKWNAFMDFRGKAQKALEEARNEKVIGKSLEAHLTIYPDAEVKELLESLNTNLAQLLIVSALTIAEGDVPESAVRFQGVSFTVERAEGEVCDRCRRIDPTTKERSYNATICNHCASIIEENFAEVVAEGFEV.

Positions 57-67 (PYANGNIHVGH) match the 'HIGH' region motif. L-isoleucyl-5'-AMP is bound at residue Glu-554. The 'KMSKS' region motif lies at 595 to 599 (KMSKS). ATP is bound at residue Lys-598. Residues Cys-888, Cys-891, Cys-908, and Cys-911 each coordinate Zn(2+).

Belongs to the class-I aminoacyl-tRNA synthetase family. IleS type 1 subfamily. Monomer. Requires Zn(2+) as cofactor.

The protein resides in the cytoplasm. It carries out the reaction tRNA(Ile) + L-isoleucine + ATP = L-isoleucyl-tRNA(Ile) + AMP + diphosphate. Its function is as follows. Catalyzes the attachment of isoleucine to tRNA(Ile). As IleRS can inadvertently accommodate and process structurally similar amino acids such as valine, to avoid such errors it has two additional distinct tRNA(Ile)-dependent editing activities. One activity is designated as 'pretransfer' editing and involves the hydrolysis of activated Val-AMP. The other activity is designated 'posttransfer' editing and involves deacylation of mischarged Val-tRNA(Ile). This chain is Isoleucine--tRNA ligase, found in Streptococcus thermophilus (strain ATCC BAA-491 / LMD-9).